A 762-amino-acid polypeptide reads, in one-letter code: Transcription factor kpeA (762 aa).

Residues 267–361 (FDHTSHGSQS…PLKPDQRKQA (95 aa)) form a disordered region. The span at 294–312 (KKPSSPTRSTGSSSSTSPP) shows a compositional bias: low complexity. A DNA-binding region (zn(2)-C6 fungal-type) is located at residues 370-401 (CLRCKFLKKTCDKGEPCAGCQPSHARLWQVPC).

The protein localises to the nucleus. In terms of biological role, transcription factor that regulates conidiation as well as kojic acid production, likely by negatively controlling kojR and kojA expression. In Aspergillus oryzae (strain ATCC 42149 / RIB 40) (Yellow koji mold), this protein is Transcription factor kpeA.